We begin with the raw amino-acid sequence, 399 residues long: Methylthioribose kinase (399 aa).

ATP contacts are provided by residues Asn40, Lys57, and 111 to 113 (EDL). Asp229 contributes to the substrate binding site. 246-248 (DAE) is an ATP binding site. Arg344 lines the substrate pocket.

The protein belongs to the methylthioribose kinase family. As to quaternary structure, homodimer.

It carries out the reaction 5-(methylsulfanyl)-D-ribose + ATP = 5-(methylsulfanyl)-alpha-D-ribose 1-phosphate + ADP + H(+). Its pathway is amino-acid biosynthesis; L-methionine biosynthesis via salvage pathway; S-methyl-5-thio-alpha-D-ribose 1-phosphate from S-methyl-5'-thioadenosine (hydrolase route): step 2/2. Its function is as follows. Catalyzes the phosphorylation of methylthioribose into methylthioribose-1-phosphate. This chain is Methylthioribose kinase, found in Klebsiella pneumoniae (strain 342).